The primary structure comprises 148 residues: Deoxyuridine 5'-triphosphate nucleotidohydrolase (148 aa).

Residues 67-69 (RSG), Asn80, 84-86 (LID), and Met94 contribute to the substrate site.

It belongs to the dUTPase family. It depends on Mg(2+) as a cofactor.

It carries out the reaction dUTP + H2O = dUMP + diphosphate + H(+). It participates in pyrimidine metabolism; dUMP biosynthesis; dUMP from dCTP (dUTP route): step 2/2. Its function is as follows. This enzyme is involved in nucleotide metabolism: it produces dUMP, the immediate precursor of thymidine nucleotides and it decreases the intracellular concentration of dUTP so that uracil cannot be incorporated into DNA. This chain is Deoxyuridine 5'-triphosphate nucleotidohydrolase, found in Burkholderia lata (strain ATCC 17760 / DSM 23089 / LMG 22485 / NCIMB 9086 / R18194 / 383).